The sequence spans 71 residues: Translational regulator CsrA (71 aa).

This sequence belongs to the CsrA/RsmA family. As to quaternary structure, homodimer; the beta-strands of each monomer intercalate to form a hydrophobic core, while the alpha-helices form wings that extend away from the core.

Its subcellular location is the cytoplasm. Its function is as follows. A key translational regulator that binds mRNA to regulate translation initiation and/or mRNA stability. Mediates global changes in gene expression, shifting from rapid growth to stress survival by linking envelope stress, the stringent response and the catabolite repression systems. Usually binds in the 5'-UTR; binding at or near the Shine-Dalgarno sequence prevents ribosome-binding, repressing translation, binding elsewhere in the 5'-UTR can activate translation and/or stabilize the mRNA. Its function is antagonized by small RNA(s). The sequence is that of Translational regulator CsrA from Pseudoalteromonas atlantica (strain T6c / ATCC BAA-1087).